A 286-amino-acid chain; its full sequence is Translocon-associated protein subunit alpha (286 aa).

Residues 1 to 23 form the signal peptide; sequence MRVLPRLLLLLLLAFPAAVLLRG. The Lumenal segment spans residues 24-207; it reads GPGGSLVAAQ…EREDGLDGET (184 aa). Residues 37–75 show a composition bias toward acidic residues; the sequence is EDEETVEDSIIEDEDDEAEVEEDEPTDLAEDKEEEDVSG. Positions 37 to 83 are disordered; the sequence is EDEETVEDSIIEDEDDEAEVEEDEPTDLAEDKEEEDVSGEPEASPSA. N-linked (GlcNAc...) asparagine glycans are attached at residues N136 and N191. Residues 208 to 228 form a helical membrane-spanning segment; sequence IFMYMFLAGLGLLVVVGLHQL. At 229–286 the chain is on the cytoplasmic side; sequence LESRKRKRPIQKVEMGTSSQNDVDMSWIPQETLNQINKASPRRLPRKRAQKRSVGSDE. Residue S247 is modified to Phosphoserine. At T260 the chain carries Phosphothreonine. The segment at 261–286 is disordered; the sequence is LNQINKASPRRLPRKRAQKRSVGSDE. S268 is modified (phosphoserine). Positions 268–279 are enriched in basic residues; it reads SPRRLPRKRAQK.

The protein belongs to the TRAP-alpha family. As to quaternary structure, heterotetramer of TRAP-alpha, TRAP-beta, TRAP-delta and TRAP-gamma. Interacts with palmitoylated calnexin (CALX), the interaction is required for efficient folding of glycosylated proteins. Phosphorylated in its cytoplasmic tail.

It is found in the endoplasmic reticulum membrane. TRAP proteins are part of a complex whose function is to bind calcium to the ER membrane and thereby regulate the retention of ER resident proteins. May be involved in the recycling of the translocation apparatus after completion of the translocation process or may function as a membrane-bound chaperone facilitating folding of translocated proteins. The chain is Translocon-associated protein subunit alpha (SSR1) from Canis lupus familiaris (Dog).